The following is a 258-amino-acid chain: Methionine aminopeptidase (258 aa).

Residue His-84 coordinates substrate. A divalent metal cation is bound by residues Asp-102, Asp-113, and His-176. His-183 provides a ligand contact to substrate. The a divalent metal cation site is built by Glu-211 and Glu-242.

It belongs to the peptidase M24A family. Methionine aminopeptidase type 1 subfamily. In terms of assembly, monomer. It depends on Co(2+) as a cofactor. The cofactor is Zn(2+). Mn(2+) serves as cofactor. Requires Fe(2+) as cofactor.

It catalyses the reaction Release of N-terminal amino acids, preferentially methionine, from peptides and arylamides.. Removes the N-terminal methionine from nascent proteins. The N-terminal methionine is often cleaved when the second residue in the primary sequence is small and uncharged (Met-Ala-, Cys, Gly, Pro, Ser, Thr, or Val). Requires deformylation of the N(alpha)-formylated initiator methionine before it can be hydrolyzed. The polypeptide is Methionine aminopeptidase (Aquifex aeolicus (strain VF5)).